The primary structure comprises 207 residues: 2,3-bisphosphoglycerate-dependent phosphoglycerate mutase (207 aa).

Residues 10 to 17 (RHGQSEWN), 23 to 24 (TG), R62, 89 to 92 (ERDY), K100, 116 to 117 (RR), and 160 to 161 (GN) contribute to the substrate site. The active-site Tele-phosphohistidine intermediate is H11. Residue E89 is the Proton donor/acceptor of the active site.

This sequence belongs to the phosphoglycerate mutase family. BPG-dependent PGAM subfamily. In terms of assembly, homodimer.

It carries out the reaction (2R)-2-phosphoglycerate = (2R)-3-phosphoglycerate. Its pathway is carbohydrate degradation; glycolysis; pyruvate from D-glyceraldehyde 3-phosphate: step 3/5. Its function is as follows. Catalyzes the interconversion of 2-phosphoglycerate and 3-phosphoglycerate. The sequence is that of 2,3-bisphosphoglycerate-dependent phosphoglycerate mutase from Rhodopseudomonas palustris (strain BisB18).